A 238-amino-acid polypeptide reads, in one-letter code: Sugar fermentation stimulation protein homolog (238 aa).

It belongs to the SfsA family.

This Alkalilimnicola ehrlichii (strain ATCC BAA-1101 / DSM 17681 / MLHE-1) protein is Sugar fermentation stimulation protein homolog.